We begin with the raw amino-acid sequence, 426 residues long: Ornithine aminotransferase (426 aa).

At lysine 291 the chain carries N6-(pyridoxal phosphate)lysine.

Belongs to the class-III pyridoxal-phosphate-dependent aminotransferase family. Requires pyridoxal 5'-phosphate as cofactor.

The enzyme catalyses a 2-oxocarboxylate + L-ornithine = L-glutamate 5-semialdehyde + an L-alpha-amino acid. The protein operates within amino-acid biosynthesis; L-proline biosynthesis; L-glutamate 5-semialdehyde from L-ornithine: step 1/1. In Vigna aconitifolia (Moth bean), this protein is Ornithine aminotransferase.